The following is a 295-amino-acid chain: 4-diphosphocytidyl-2-C-methyl-D-erythritol kinase (295 aa).

Residue K18 is part of the active site. Residue 101–111 (PMGGGIGGGSS) participates in ATP binding. D143 is a catalytic residue.

This sequence belongs to the GHMP kinase family. IspE subfamily.

The enzyme catalyses 4-CDP-2-C-methyl-D-erythritol + ATP = 4-CDP-2-C-methyl-D-erythritol 2-phosphate + ADP + H(+). It functions in the pathway isoprenoid biosynthesis; isopentenyl diphosphate biosynthesis via DXP pathway; isopentenyl diphosphate from 1-deoxy-D-xylulose 5-phosphate: step 3/6. Functionally, catalyzes the phosphorylation of the position 2 hydroxy group of 4-diphosphocytidyl-2C-methyl-D-erythritol. This chain is 4-diphosphocytidyl-2-C-methyl-D-erythritol kinase, found in Vibrio vulnificus (strain YJ016).